We begin with the raw amino-acid sequence, 360 residues long: MAEPDLECEQIRLKCIRKEGFFTVPPEHRLGRCRSVKEFEKLNRIGEGTYGIVYRARDTQTDEIVALKKVRMDKEKDGIPISSLREITLLLRLRHPNIVELKEVVVGNHLESIFLVMGYCEQDLASLLENMPTPFSEAQVKCIVLQVLRGLQYLHRNFIIHRDLKVSNLLMTDKGCVKTADFGLARAYGVPVKPMTPKVVTLWYRAPELLLGTTTQTTSIDMWAVGCILAELLAHRPLLPGTSEIHQIDLIVQLLGTPSENIWPGFSKLPLVGQYSLRKQPYNNLKHKFPWLSEAGLRLLHFLFMYDPKKRATAGDCLESSYFKEKPLPCEPELMPTFPHHRNKRAAPATSEGQSKRCKP.

The region spanning 39-323 is the Protein kinase domain; the sequence is FEKLNRIGEG…AGDCLESSYF (285 aa). ATP-binding positions include 45-53 and K68; that span reads IGEGTYGIV. The Proton acceptor role is filled by D163. T196 carries the post-translational modification Phosphothreonine. Positions 334 to 360 are disordered; sequence LMPTFPHHRNKRAAPATSEGQSKRCKP.

It belongs to the protein kinase superfamily. CMGC Ser/Thr protein kinase family. CDC2/CDKX subfamily. As to quaternary structure, heterodimer with CCNQ, the interaction is required for kinase activity. Interacts with ETS2. Interacts with PRK2.

Its subcellular location is the cytoplasm. It localises to the cytoskeleton. It is found in the cilium basal body. The catalysed reaction is L-seryl-[protein] + ATP = O-phospho-L-seryl-[protein] + ADP + H(+). It catalyses the reaction L-threonyl-[protein] + ATP = O-phospho-L-threonyl-[protein] + ADP + H(+). Its function is as follows. Cyclin-dependent kinase that phosphorylates the transcription factor ETS2 (in vitro) and positively controls its proteasomal degradation (in cells). Involved in the regulation of actin cytoskeleton organization through the phosphorylation of actin dynamics regulators such as PKN2. Is a negative regulator of ciliogenesis through phosphorylation of PKN2 and promotion of RhoA signaling. This is Cyclin-dependent kinase 10 (CDK10) from Homo sapiens (Human).